The primary structure comprises 1140 residues: MSYNYVVTAQKPTAVNGCVTGHFTSAEDLNLLIAKNTRLEIYVVTAEGLRPVKEVGMYGKIAVMELFRPKGESKDLLFILTAKYNACILEYKQSGESIDIITRAHGNVQDRIGRPSETGIIGIIDPECRMIGLRLYDGLFKVIPLDRDNKELKAFNIRLEELHVIDVKFLYGCQAPTICFVYQDPQGRHVKTYEVSLREKEFNKGPWKQENVEAEASMVIAVPEPFGGAIIIGQESITYHNGDKYLAIAPPIIKQSTIVCHNRVDPNGSRYLLGDMEGRLFMLLLEKEEQMDGTVTLKDLRVELLGETSIAECLTYLDNGVVFVGSRLGDSQLVKLNVDSNEQGSYVVAMETFTNLGPIVDMCVVDLERQGQGQLVTCSGAFKEGSLRIIRNGIGIHEHASIDLPGIKGLWPLRSDPNRETDDTLVLSFVGQTRVLMLNGEEVEETELMGFVDDQQTFFCGNVAHQQLIQITSASVRLVSQEPKALVSEWKEPQAKNISVASCNSSQVVVAVGRALYYLQIHPQELRQISHTEMEHEVACLDITPLGDSNGLSPLCAIGLWTDISARILKLPSFELLHKEMLGGEIIPRSILMTTFESSHYLLCALGDGALFYFGLNIETGLLSDRKKVTLGTQPTVLRTFRSLSTTNVFACSDRPTVIYSSNHKLVFSNVNLKEVNYMCPLNSDGYPDSLALANNSTLTIGTIDEIQKLHIRTVPLYESPRKICYQEVSQCFGVLSSRIEVQDTSGGTTALRPSASTQALSSSVSSSKLFSSSTAPHETSFGEEVEVHNLLIIDQHTFEVLHAHQFLQNEYALSLVSCKLGKDPNTYFIVGTAMVYPEEAEPKQGRIVVFQYSDGKLQTVAEKEVKGAVYSMVEFNGKLLASINSTVRLYEWTTEKELRTECNHYNNIMALYLKTKGDFILVGDLMRSVLLLAYKPMEGNFEEIARDFNPNWMSAVEILDDDNFLGAENAFNLFVCQKDSAATTDEERQHLQEVGLFHLGEFVNVFCHGSLVMQNLGETSTPTQGSVLFGTVNGMIGLVTSLSESWYNLLLDMQNRLNKVIKSVGKIEHSFWRSFHTERKTEPATGFIDGDLIESFLDISRPKMQEVVANLQYDDGSGMKREATADDLIKVVEELTRIH.

Ser-2 bears the N-acetylserine mark. The interval 2–768 (SYNYVVTAQK…QALSSSVSSS (767 aa)) is interaction with CDT1. Residues 13–356 (TAVNGCVTGH…VVAMETFTNL (344 aa)) are WD repeat beta-propeller A. Residues 392–708 (NGIGIHEHAS…LTIGTIDEIQ (317 aa)) form a WD repeat beta-propeller B; Interaction with CUL4A region. Residues 709–1043 (KLHIRTVPLY…NGMIGLVTSL (335 aa)) form a WD repeat beta-propeller C region. The interaction with CDT1 and CUL4A stretch occupies residues 771–1140 (FSSSTAPHET…KVVEELTRIH (370 aa)). Lys-1067 bears the N6-acetyllysine mark. Lys-1121 is covalently cross-linked (Glycyl lysine isopeptide (Lys-Gly) (interchain with G-Cter in SUMO2)). Position 1125 is a phosphothreonine (Thr-1125).

The protein belongs to the DDB1 family. As to quaternary structure, component of the UV-DDB complex which includes DDB1 and DDB2; the heterodimer dimerizes to give rise to a heterotetramer when bound to damaged DNA. The UV-DDB complex interacts with monoubiquitinated histone H2A and binds to XPC via the DDB2 subunit. Component of numerous DCX (DDB1-CUL4-X-box) E3 ubiquitin-protein ligase complexes which consist of a core of DDB1, CUL4A or CUL4B and RBX1. DDB1 may recruit specific substrate targeting subunits to the DCX complex. These substrate targeting subunits are generally known as DCAF (DDB1- and CUL4-associated factor) or CDW (CUL4-DDB1-associated WD40-repeat) proteins. Interacts with AMBRA1, ATG16L1, BTRC, CRBN, DCAF1, DCAF4, DCAF5, DCAF6, DCAF7, DCAF8, DCAF9, DCAF10, DCAF11, DCAF12, DCAF15, DCAF16, DCAF17, DDA1, DET1, DTL, ERCC8, FBXW5, FBXW8, GRWD1, KATNB1, NLE1, NUP43, PAFAH1B1, PHIP, PWP1, RBBP4, RBBP5, RBBP7, COP1, SNRNP40, DCAF1, WDR5, WDR5B, WDR12, WDR26, WDR39, WDR42, WDR53, WDR59, WDR61, WSB1, WSB2, LRWD1 and WDTC1. DCX complexes may associate with the COP9 signalosome, and this inhibits the E3 ubiquitin-protein ligase activity of the complex. Interacts with NF2, TSC1 and TSC2. Interacts with AGO1 and AGO2. Associates with the E3 ligase complex containing DYRK2, EDD/UBR5, DDB1 and DCAF1 proteins (EDVP complex). Interacts directly with DYRK2. DCX(DTL) complex interacts with FBXO11; does not ubiquitinate and degradate FBXO11. Interacts with TRPC4AP. Interacts with CRY1 and CRY2. The DDB1-CUL4A complex interacts with CRY1. May also interact with DCUN1D1, DCUN1D2, DCUN1D3 and DCUN1D5. Component of the DCX(DCAF13) E3 ubiquitin ligase complex, at least composed of CUL4 (CUL4A or CUL4B), DDB1, DCAF13 and RBX1. Interacts with DCAF13 (via WD40 domain). In terms of assembly, (Microbial infection) Interacts with Simian virus 5 protein V. (Microbial infection) Interacts with hepatitis B virus protein HBX; the viral protein contains a short helical motif that competes for the same binding site as the N-terminal helical motif found in endogenous DCAF proteins. As to quaternary structure, (Microbial infection) Interacts with human cytomegalovirus protein UL145; this interaction promotes STAT2 degradation. In terms of assembly, (Microbial infection) Interacts with human cytomegalovirus protein RL1; this interaction allows RL1 to recruit the cullin4-RING E3 ubiquitin ligase (CRL4) complex and promote SLN11 degradation. Phosphorylated by ABL1. In terms of processing, ubiquitinated by CUL4A. Subsequently degraded by ubiquitin-dependent proteolysis. Post-translationally, acetylated, promoting interaction with CUL4 (CUL4A or CUL4B) and subsequent formation of DCX (DDB1-CUL4-X-box) E3 ubiquitin-protein ligase complexes. Deacetylation by SIRT7 impairs the interaction with CUL4 (CUL4A or CUL4B) and formation of DCX (DDB1-CUL4-X-box) E3 ubiquitin-protein ligase complexes.

It is found in the cytoplasm. It localises to the nucleus. It functions in the pathway protein modification; protein ubiquitination. Its function is as follows. Protein, which is both involved in DNA repair and protein ubiquitination, as part of the UV-DDB complex and DCX (DDB1-CUL4-X-box) complexes, respectively. Core component of the UV-DDB complex (UV-damaged DNA-binding protein complex), a complex that recognizes UV-induced DNA damage and recruit proteins of the nucleotide excision repair pathway (the NER pathway) to initiate DNA repair. The UV-DDB complex preferentially binds to cyclobutane pyrimidine dimers (CPD), 6-4 photoproducts (6-4 PP), apurinic sites and short mismatches. Also functions as a component of numerous distinct DCX (DDB1-CUL4-X-box) E3 ubiquitin-protein ligase complexes which mediate the ubiquitination and subsequent proteasomal degradation of target proteins. The functional specificity of the DCX E3 ubiquitin-protein ligase complex is determined by the variable substrate recognition component recruited by DDB1. DCX(DDB2) (also known as DDB1-CUL4-ROC1, CUL4-DDB-ROC1 and CUL4-DDB-RBX1) may ubiquitinate histone H2A, histone H3 and histone H4 at sites of UV-induced DNA damage. The ubiquitination of histones may facilitate their removal from the nucleosome and promote subsequent DNA repair. DCX(DDB2) also ubiquitinates XPC, which may enhance DNA-binding by XPC and promote NER. DCX(DTL) plays a role in PCNA-dependent polyubiquitination of CDT1 and MDM2-dependent ubiquitination of TP53 in response to radiation-induced DNA damage and during DNA replication. DCX(ERCC8) (the CSA complex) plays a role in transcription-coupled repair (TCR). The DDB1-CUL4A-DTL E3 ligase complex regulates the circadian clock function by mediating the ubiquitination and degradation of CRY1. DDB1-mediated CRY1 degradation promotes FOXO1 protein stability and FOXO1-mediated gluconeogenesis in the liver. By acting on TET dioxygenses, essential for oocyte maintenance at the primordial follicle stage, hence essential for female fertility. Maternal factor required for proper zygotic genome activation and genome reprogramming. This is DNA damage-binding protein 1 (DDB1) from Homo sapiens (Human).